Here is a 194-residue protein sequence, read N- to C-terminus: Dihydrofolate reductase HdrB (194 aa).

In terms of domain architecture, DHFR spans 18–194 (RFVLVAAVAD…ADRGAEESDE (177 aa)). NADP(+) contacts are provided by residues Ala24 and 30–36 (VIGRDGT). Asp44 contacts substrate. Residue 62 to 63 (KT) coordinates NADP(+). The substrate site is built by Arg69 and Arg78. Residues 84–85 (TT) and 123–130 (GGATVYEQ) contribute to the NADP(+) site. Residue Thr141 participates in substrate binding. A disordered region spans residues 173 to 194 (SFVTYERKQPAAADRGAEESDE).

Belongs to the dihydrofolate reductase family.

It carries out the reaction (6S)-5,6,7,8-tetrahydrofolate + NADP(+) = 7,8-dihydrofolate + NADPH + H(+). The protein operates within cofactor biosynthesis; tetrahydrofolate biosynthesis; 5,6,7,8-tetrahydrofolate from 7,8-dihydrofolate: step 1/1. With respect to regulation, maximum activity at KCl concentration of 0.5 M and activity decreases with increasing concentration of KCl. Its function is as follows. Key enzyme in folate metabolism. Catalyzes an essential reaction for de novo glycine and purine synthesis, and for DNA precursor synthesis. The chain is Dihydrofolate reductase HdrB (hdrB) from Haloferax volcanii (Halobacterium volcanii).